A 449-amino-acid polypeptide reads, in one-letter code: Myb-related protein Pp1 (449 aa).

The HTH myb-type domain occupies 1-30 (LGNRWSAIAIPRRTDNEIKNYWNTHLKKRL). Residues 5–26 (WSAIAIPRRTDNEIKNYWNTHL) constitute a DNA-binding region (H-T-H motif).

It localises to the nucleus. Functionally, possible transcription activator. In Physcomitrium patens (Spreading-leaved earth moss), this protein is Myb-related protein Pp1 (PP1).